The sequence spans 130 residues: Small ribosomal subunit protein uS9 (130 aa).

This sequence belongs to the universal ribosomal protein uS9 family.

The polypeptide is Small ribosomal subunit protein uS9 (Buchnera aphidicola subsp. Baizongia pistaciae (strain Bp)).